The primary structure comprises 359 residues: 3-isopropylmalate dehydrogenase (359 aa).

Arg97, Arg107, Arg135, and Asp224 together coordinate substrate. The Mg(2+) site is built by Asp224, Asp248, and Asp252. An NAD(+)-binding site is contributed by Gly282–Asn294.

This sequence belongs to the isocitrate and isopropylmalate dehydrogenases family. LeuB type 1 subfamily. As to quaternary structure, homodimer. Requires Mg(2+) as cofactor. The cofactor is Mn(2+).

The protein resides in the cytoplasm. The catalysed reaction is (2R,3S)-3-isopropylmalate + NAD(+) = 4-methyl-2-oxopentanoate + CO2 + NADH. It functions in the pathway amino-acid biosynthesis; L-leucine biosynthesis; L-leucine from 3-methyl-2-oxobutanoate: step 3/4. Its function is as follows. Catalyzes the oxidation of 3-carboxy-2-hydroxy-4-methylpentanoate (3-isopropylmalate) to 3-carboxy-4-methyl-2-oxopentanoate. The product decarboxylates to 4-methyl-2 oxopentanoate. The protein is 3-isopropylmalate dehydrogenase of Prochlorococcus marinus (strain NATL2A).